Reading from the N-terminus, the 170-residue chain is Acetyl-CoA decarbonylase/synthase complex subunit epsilon 1 (170 aa).

The protein belongs to the CdhB family. As to quaternary structure, heterotetramer of two alpha and two epsilon subunits. The ACDS complex is made up of alpha, epsilon, beta, gamma and delta subunits with a probable stoichiometry of (alpha(2)epsilon(2))(4)-beta(8)-(gamma(1)delta(1))(8).

It functions in the pathway one-carbon metabolism; methanogenesis from acetate. Functionally, part of a complex that catalyzes the reversible cleavage of acetyl-CoA, allowing growth on acetate as sole source of carbon and energy. The alpha-epsilon subcomponent functions as a carbon monoxide dehydrogenase. The precise role of the epsilon subunit is unclear; it may have a stabilizing role within the alpha(2)epsilon(2) component and/or be involved in electron transfer to FAD during a potential FAD-mediated CO oxidation. The chain is Acetyl-CoA decarbonylase/synthase complex subunit epsilon 1 from Methanosarcina barkeri (strain Fusaro / DSM 804).